Reading from the N-terminus, the 309-residue chain is UPF0282 protein Saci_0277 (309 aa).

This sequence belongs to the UPF0282 family.

In Sulfolobus acidocaldarius (strain ATCC 33909 / DSM 639 / JCM 8929 / NBRC 15157 / NCIMB 11770), this protein is UPF0282 protein Saci_0277.